A 443-amino-acid polypeptide reads, in one-letter code: Transmembrane protein 184C (443 aa).

7 consecutive transmembrane segments (helical) span residues 15 to 35 (LVVLLYIVGLIVGVPICIWKL), 46 to 66 (AWFIAGIFVLMTIPISLWGIL), 84 to 104 (ILWMVPIYSVDSWIALKYPDI), 182 to 202 (PVTTVIALICQLTGVYGEGDF), 210 to 230 (YLVIINNVSQVFAMYCLVLFY), 252 to 272 (VVFVSFWQAVFIAILVKAGVI), and 284 to 304 (VATGLQDFIICVEMFLAAVAH). The segment covering 369–378 (TSLLSSSTQD) has biased composition (polar residues). The segment at 369–422 (TSLLSSSTQDPISAASSIPPSPSGHYQGFGQTITPQTTPTATTMPEELYSADSP) is disordered. Over residues 399 to 411 (QTITPQTTPTATT) the composition is skewed to low complexity.

Belongs to the TMEM184 family.

The protein resides in the membrane. Its function is as follows. May play a role in cell growth. This chain is Transmembrane protein 184C (tmem184c), found in Xenopus tropicalis (Western clawed frog).